The chain runs to 219 residues: Segregation and condensation protein B (219 aa).

The tract at residues 193 to 219 (SLFAGGEEPSAEAADGGAGESTHGEEE) is disordered. The span at 196–207 (AGGEEPSAEAAD) shows a compositional bias: low complexity.

It belongs to the ScpB family. Homodimer. Homodimerization may be required to stabilize the binding of ScpA to the Smc head domains. Component of a cohesin-like complex composed of ScpA, ScpB and the Smc homodimer, in which ScpA and ScpB bind to the head domain of Smc. The presence of the three proteins is required for the association of the complex with DNA.

The protein resides in the cytoplasm. Functionally, participates in chromosomal partition during cell division. May act via the formation of a condensin-like complex containing Smc and ScpA that pull DNA away from mid-cell into both cell halves. The chain is Segregation and condensation protein B from Symbiobacterium thermophilum (strain DSM 24528 / JCM 14929 / IAM 14863 / T).